The sequence spans 282 residues: Pantothenate synthetase (282 aa).

Met30 to His37 provides a ligand contact to ATP. The Proton donor role is filled by His37. A (R)-pantoate-binding site is contributed by Gln61. Residue Gln61 participates in beta-alanine binding. Gly147–Asp150 contacts ATP. A (R)-pantoate-binding site is contributed by Gln153. Residues Val176 and Lys184 to Arg187 each bind ATP.

It belongs to the pantothenate synthetase family. Homodimer.

It is found in the cytoplasm. It carries out the reaction (R)-pantoate + beta-alanine + ATP = (R)-pantothenate + AMP + diphosphate + H(+). The protein operates within cofactor biosynthesis; (R)-pantothenate biosynthesis; (R)-pantothenate from (R)-pantoate and beta-alanine: step 1/1. Functionally, catalyzes the condensation of pantoate with beta-alanine in an ATP-dependent reaction via a pantoyl-adenylate intermediate. This chain is Pantothenate synthetase, found in Bacillus cereus (strain ZK / E33L).